Here is a 191-residue protein sequence, read N- to C-terminus: Small ribosomal subunit protein eS7 (191 aa).

The protein belongs to the eukaryotic ribosomal protein eS7 family.

This chain is Small ribosomal subunit protein eS7 (RPS7), found in Hordeum vulgare (Barley).